A 502-amino-acid chain; its full sequence is NADH-quinone oxidoreductase subunit N (502 aa).

A run of 14 helical transmembrane segments spans residues 16 to 36, 47 to 67, 85 to 105, 113 to 133, 138 to 158, 172 to 192, 213 to 233, 248 to 268, 273 to 293, 310 to 330, 337 to 357, 387 to 407, 410 to 430, and 470 to 490; these read TLVPMLIPIIGALFIIVIDLF, MLSLLILGVDFVALVDSAGVF, LAILSQFIIVGASMLFIPLAL, FSYPEFFALFLFMIAGFQFMV, LILIFVGLETASLALYTLIAM, FTMGALAAGFFSFGSMVFYAL, IGFVLVGVVFLLAAFGFKLSM, SAALAGYMSIVPKIAAFIVAM, FLIHSGVVWLEVILYMGVVVT, MLAYSSISHAGFVMAAILIGT, LFLYWILFSFTNLGSFSMLWI, ASIMALFMLSLAGIPPFALFW, MYLMSSAITGGYTVLALIMAL, and TIIGIAAIGTIFAFVAVNQLI.

It belongs to the complex I subunit 2 family. In terms of assembly, NDH-1 is composed of 14 different subunits. Subunits NuoA, H, J, K, L, M, N constitute the membrane sector of the complex.

The protein localises to the cell inner membrane. The enzyme catalyses a quinone + NADH + 5 H(+)(in) = a quinol + NAD(+) + 4 H(+)(out). NDH-1 shuttles electrons from NADH, via FMN and iron-sulfur (Fe-S) centers, to quinones in the respiratory chain. The immediate electron acceptor for the enzyme in this species is believed to be ubiquinone. Couples the redox reaction to proton translocation (for every two electrons transferred, four hydrogen ions are translocated across the cytoplasmic membrane), and thus conserves the redox energy in a proton gradient. This chain is NADH-quinone oxidoreductase subunit N, found in Sulfurimonas denitrificans (strain ATCC 33889 / DSM 1251) (Thiomicrospira denitrificans (strain ATCC 33889 / DSM 1251)).